The chain runs to 72 residues: Translation initiation factor IF-1 (72 aa).

In terms of domain architecture, S1-like spans 1–72 (MTKEDSFEMH…SKGRIIFRSR (72 aa)).

It belongs to the IF-1 family. As to quaternary structure, component of the 30S ribosomal translation pre-initiation complex which assembles on the 30S ribosome in the order IF-2 and IF-3, IF-1 and N-formylmethionyl-tRNA(fMet); mRNA recruitment can occur at any time during PIC assembly.

It is found in the cytoplasm. Its function is as follows. One of the essential components for the initiation of protein synthesis. Stabilizes the binding of IF-2 and IF-3 on the 30S subunit to which N-formylmethionyl-tRNA(fMet) subsequently binds. Helps modulate mRNA selection, yielding the 30S pre-initiation complex (PIC). Upon addition of the 50S ribosomal subunit IF-1, IF-2 and IF-3 are released leaving the mature 70S translation initiation complex. In Blochmanniella pennsylvanica (strain BPEN), this protein is Translation initiation factor IF-1.